We begin with the raw amino-acid sequence, 234 residues long: 1-(5-phosphoribosyl)-5-[(5-phosphoribosylamino)methylideneamino] imidazole-4-carboxamide isomerase (234 aa).

The Proton acceptor role is filled by aspartate 8. Catalysis depends on aspartate 128, which acts as the Proton donor.

It belongs to the HisA/HisF family.

The protein resides in the cytoplasm. The enzyme catalyses 1-(5-phospho-beta-D-ribosyl)-5-[(5-phospho-beta-D-ribosylamino)methylideneamino]imidazole-4-carboxamide = 5-[(5-phospho-1-deoxy-D-ribulos-1-ylimino)methylamino]-1-(5-phospho-beta-D-ribosyl)imidazole-4-carboxamide. The protein operates within amino-acid biosynthesis; L-histidine biosynthesis; L-histidine from 5-phospho-alpha-D-ribose 1-diphosphate: step 4/9. This chain is 1-(5-phosphoribosyl)-5-[(5-phosphoribosylamino)methylideneamino] imidazole-4-carboxamide isomerase, found in Cenarchaeum symbiosum (strain A).